Here is a 409-residue protein sequence, read N- to C-terminus: UDP-N-acetylglucosamine--N-acetylmuramyl-(pentapeptide) pyrophosphoryl-undecaprenol N-acetylglucosamine transferase (409 aa).

UDP-N-acetyl-alpha-D-glucosamine is bound by residues 11–13 (TGG), Asn-125, Arg-169, Ser-199, and Gln-299.

Belongs to the glycosyltransferase 28 family. MurG subfamily.

The protein localises to the cell membrane. It carries out the reaction di-trans,octa-cis-undecaprenyl diphospho-N-acetyl-alpha-D-muramoyl-L-alanyl-D-glutamyl-meso-2,6-diaminopimeloyl-D-alanyl-D-alanine + UDP-N-acetyl-alpha-D-glucosamine = di-trans,octa-cis-undecaprenyl diphospho-[N-acetyl-alpha-D-glucosaminyl-(1-&gt;4)]-N-acetyl-alpha-D-muramoyl-L-alanyl-D-glutamyl-meso-2,6-diaminopimeloyl-D-alanyl-D-alanine + UDP + H(+). Its pathway is cell wall biogenesis; peptidoglycan biosynthesis. Cell wall formation. Catalyzes the transfer of a GlcNAc subunit on undecaprenyl-pyrophosphoryl-MurNAc-pentapeptide (lipid intermediate I) to form undecaprenyl-pyrophosphoryl-MurNAc-(pentapeptide)GlcNAc (lipid intermediate II). In Clostridioides difficile (strain 630) (Peptoclostridium difficile), this protein is UDP-N-acetylglucosamine--N-acetylmuramyl-(pentapeptide) pyrophosphoryl-undecaprenol N-acetylglucosamine transferase.